The following is a 265-amino-acid chain: Polyphosphate glucokinase (265 aa).

The span at 1-18 shows a compositional bias: polar residues; that stretch reads MTSTGPETSETPGATTQR. The disordered stretch occupies residues 1–22; it reads MTSTGPETSETPGATTQRHGFG. 24 to 29 contacts ATP; the sequence is DVGGSG.

It belongs to the ROK (NagC/XylR) family. Homodimer.

It catalyses the reaction [phosphate](n) + D-glucose = [phosphate](n-1) + D-glucose 6-phosphate + H(+). It carries out the reaction D-glucose + ATP = D-glucose 6-phosphate + ADP + H(+). In terms of biological role, catalyzes the phosphorylation of glucose using polyphosphate or ATP as the phosphoryl donor. Polyphosphate, rather than ATP, seems to be the major phosphate donor for the enzyme in M.tuberculosis. GTP, UTP and CTP can replace ATP as phosphoryl donor. In Mycobacterium tuberculosis (strain ATCC 25177 / H37Ra), this protein is Polyphosphate glucokinase (ppgK).